The sequence spans 423 residues: Gamma-glutamyl phosphate reductase (423 aa).

Belongs to the gamma-glutamyl phosphate reductase family.

It is found in the cytoplasm. It carries out the reaction L-glutamate 5-semialdehyde + phosphate + NADP(+) = L-glutamyl 5-phosphate + NADPH + H(+). The protein operates within amino-acid biosynthesis; L-proline biosynthesis; L-glutamate 5-semialdehyde from L-glutamate: step 2/2. Functionally, catalyzes the NADPH-dependent reduction of L-glutamate 5-phosphate into L-glutamate 5-semialdehyde and phosphate. The product spontaneously undergoes cyclization to form 1-pyrroline-5-carboxylate. The sequence is that of Gamma-glutamyl phosphate reductase from Pseudomonas putida (strain W619).